The chain runs to 102 residues: uncharacterized protein (102 aa).

The helical transmembrane segment at 7-23 (IVFVSCVILGLAACSSQ) threads the bilayer.

It is found in the membrane. This is an uncharacterized protein from Haemophilus influenzae (strain ATCC 51907 / DSM 11121 / KW20 / Rd).